The following is an 80-amino-acid chain: Translation initiation factor IF-1, chloroplastic (80 aa).

In terms of domain architecture, S1-like spans 1 to 74 (MKEQKWIHEG…TRGRIIYRLR (74 aa)).

Belongs to the IF-1 family. Component of the 30S ribosomal translation pre-initiation complex which assembles on the 30S ribosome in the order IF-2 and IF-3, IF-1 and N-formylmethionyl-tRNA(fMet); mRNA recruitment can occur at any time during PIC assembly.

Its subcellular location is the plastid. It localises to the chloroplast. One of the essential components for the initiation of protein synthesis. Stabilizes the binding of IF-2 and IF-3 on the 30S subunit to which N-formylmethionyl-tRNA(fMet) subsequently binds. Helps modulate mRNA selection, yielding the 30S pre-initiation complex (PIC). Upon addition of the 50S ribosomal subunit IF-1, IF-2 and IF-3 are released leaving the mature 70S translation initiation complex. The chain is Translation initiation factor IF-1, chloroplastic from Illicium parviflorum (Yellow anise tree).